Reading from the N-terminus, the 679-residue chain is Protein hook (679 aa).

Residues 6–123 (NEMYYSLLEW…RLLQLVLGCA (118 aa)) form the Calponin-homology (CH) domain. Coiled-coil stretches lie at residues 135–437 (EIMC…LKCG) and 480–574 (QTAL…QEIL).

This sequence belongs to the hook family. In terms of assembly, homodimer. Interacts with microtubules via its N-terminus.

The protein resides in the cytoplasm. The protein localises to the cytoskeleton. It localises to the endosome. It is found in the synapse. Its function is as follows. Involved in endocytic trafficking by stabilizing organelles of the endocytic pathway. Probably acts as a cytoskeletal linker protein required to tether endosome vesicles to the cytoskeleton. Involved in modulation of endocytosis at stages required for down-regulation of membrane proteins that control synapse size. Not involved in synaptic vesicle recycling. Required in R7 cells for boss endocytosis into multivesicular bodies (MVBs). Has a role in regulating adult longevity. This Drosophila yakuba (Fruit fly) protein is Protein hook.